The sequence spans 271 residues: Aquaporin-11 (271 aa).

The Cytoplasmic portion of the chain corresponds to 1-14 (MSALLGLRPEVQDT). A helical membrane pass occupies residues 15–35 (CISLGLMLLFVLFVGLARVIA). Over 36-41 (RQQLHR) the chain is Lumenal. A helical transmembrane segment spans residues 42-62 (PVVHAFVLEFLATFQLCCCTH). At 63–76 (ELQVLSEQDSAHPT) the chain is on the cytoplasmic side. The chain crosses the membrane as a helical span at residues 77–97 (WTLTLIYFFSLVHGLTLVGTA). Topologically, residues 98–166 (SNPCGVMMQM…NPIHTDMSKA (69 aa)) are lumenal. The NPC signature appears at 99-101 (NPC). A helical membrane pass occupies residues 167-187 (IIIEAICSFIFHSALLHFQEV). Residues 188–194 (RTKLRIH) are Cytoplasmic-facing. A helical membrane pass occupies residues 195-215 (LLAALITFLAYAGGSLTGALF). The NPA signature appears at 216–218 (NPA). Over 216–234 (NPALALSLHFPCFDELFYK) the chain is Lumenal. A helical transmembrane segment spans residues 235 to 255 (FFVVYWLAPSVGVLMMILMFS). At 256–271 (FFLPWLHNNQMTNKKE) the chain is on the cytoplasmic side.

The protein belongs to the MIP/aquaporin (TC 1.A.8) family. AQP11/AQP12 subfamily. Homodimer; disulfide-linked. Homotetramer. Can also form homomultimer. Not glycosylated. As to expression, highly expressed in the S1 proximal tubule segment,. Expressed in the testis, kidney, and liver. Weakly expressed in the heart, brain, and muscle. Highly expressed in the testis. Expressed in the proximal tubule of the cortex of 8-day-old mouse kidney. Expressed in retina specifically at retinal Mueller glial cells. Expressed in brain. Expressed abundantly at the choroid plexus but also expressed weakly in the parenchyma. Expressed at the capillary endothelium in the cerebral white matter. Expressed in adult testis, in the elongated spermatids (ES) and in residual bodies inside Sertoli cells.

The protein localises to the endoplasmic reticulum membrane. It is found in the cytoplasmic vesicle membrane. It localises to the cell membrane. It catalyses the reaction H2O(in) = H2O(out). The enzyme catalyses glycerol(in) = glycerol(out). The catalysed reaction is H2O2(out) = H2O2(in). Its function is as follows. Channel protein that facilitates the transport of water, glycerol and hydrogen peroxide across membrane of cell or organelles guaranteeing intracellular homeostasis in several organes like liver, kidney and brain. In situation of stress, participates in endoplasmic reticulum (ER) homeostasis by regulating redox homeostasis through the transport of hydrogen peroxide across the endoplasmic reticulum membrane thereby regulating the oxidative stress through the NADPH oxidase 2 pathway. Plays a role by maintaining an environment suitable for translation or protein foldings in the ER lumen namely by participating in the PKD1 glycosylation processing resulting in regulation of PKD1 membrane trafficking thereby preventing the accumulation of unfolding protein in ER. Plays a role in the proximal tubule function by regulating its endosomal acidification. May play a role in postnatal kidney development. The chain is Aquaporin-11 from Mus musculus (Mouse).